Reading from the N-terminus, the 263-residue chain is Cytochrome c oxidase subunit 3 (263 aa).

Helical transmembrane passes span 9 to 29 (PFHM…AMIL), 40 to 60 (FNMN…IQWW), 84 to 104 (GMIL…WAFF), 129 to 149 (IQIP…ITWA), 161 to 181 (ALQG…LQMY), 198 to 218 (TFFV…TFLL), and 241 to 261 (AWYW…IYWW).

The protein belongs to the cytochrome c oxidase subunit 3 family. In terms of assembly, component of the cytochrome c oxidase (complex IV, CIV), a multisubunit enzyme composed of a catalytic core of 3 subunits and several supernumerary subunits. The complex exists as a monomer or a dimer and forms supercomplexes (SCs) in the inner mitochondrial membrane with ubiquinol-cytochrome c oxidoreductase (cytochrome b-c1 complex, complex III, CIII).

The protein resides in the mitochondrion inner membrane. It carries out the reaction 4 Fe(II)-[cytochrome c] + O2 + 8 H(+)(in) = 4 Fe(III)-[cytochrome c] + 2 H2O + 4 H(+)(out). In terms of biological role, component of the cytochrome c oxidase, the last enzyme in the mitochondrial electron transport chain which drives oxidative phosphorylation. The respiratory chain contains 3 multisubunit complexes succinate dehydrogenase (complex II, CII), ubiquinol-cytochrome c oxidoreductase (cytochrome b-c1 complex, complex III, CIII) and cytochrome c oxidase (complex IV, CIV), that cooperate to transfer electrons derived from NADH and succinate to molecular oxygen, creating an electrochemical gradient over the inner membrane that drives transmembrane transport and the ATP synthase. Cytochrome c oxidase is the component of the respiratory chain that catalyzes the reduction of oxygen to water. Electrons originating from reduced cytochrome c in the intermembrane space (IMS) are transferred via the dinuclear copper A center (CU(A)) of subunit 2 and heme A of subunit 1 to the active site in subunit 1, a binuclear center (BNC) formed by heme A3 and copper B (CU(B)). The BNC reduces molecular oxygen to 2 water molecules using 4 electrons from cytochrome c in the IMS and 4 protons from the mitochondrial matrix. The sequence is that of Cytochrome c oxidase subunit 3 (COIII) from Locusta migratoria (Migratory locust).